The following is a 241-amino-acid chain: DnaJ homolog subfamily B member 6 (241 aa).

The tract at residues 2–146 (VDYYEVLGVQ…TGSFFSAFSG (145 aa)) is interaction with HSP70. The J domain maps to 3–69 (DYYEVLGVQR…KKRDIYDKYG (67 aa)). Residues 119–241 (FEDFFGNRRG…KEQLLRLDNK (123 aa)) are interaction with KRT18. The residue at position 135 (Arg-135) is an Omega-N-methylarginine.

Homooligomer. Interacts with BAG3, HSPB8 and STUB1. Interacts with ALKBH1. Interacts with HSP70, KRT18 and PTTG.

Its subcellular location is the cytoplasm. The protein localises to the perinuclear region. The protein resides in the nucleus. It is found in the myofibril. It localises to the sarcomere. Its subcellular location is the z line. Functionally, has a stimulatory effect on the ATPase activity of HSP70 in a dose-dependent and time-dependent manner and hence acts as a co-chaperone of HSP70. Plays an indispensable role in the organization of KRT8/KRT18 filaments. Acts as an endogenous molecular chaperone for neuronal proteins including huntingtin. Suppresses aggregation and toxicity of polyglutamine-containing, aggregation-prone proteins. Also reduces cellular toxicity and caspase-3 activity. The sequence is that of DnaJ homolog subfamily B member 6 from Macaca fascicularis (Crab-eating macaque).